The primary structure comprises 255 residues: Testis-specific H1 histone (255 aa).

The segment at 1–54 (MEQALTGEAQSRWPRRGGSGAMAEAPGPSGESRGHSATQLPAEKTVGGPSRGCS) is disordered. Ser56 is modified (phosphoserine). Over residues 124 to 134 (KVPKPRRKPGR) the composition is skewed to basic residues. A disordered region spans residues 124-255 (KVPKPRRKPG…PKKPAQRTIQ (132 aa)). Residues 142–152 (RAPWRTPAAPR) are compositionally biased toward low complexity. Basic residues-rich tracts occupy residues 153–166 (SSRR…KAAR) and 174–194 (RNAR…RARP). Composition is skewed to basic and acidic residues over residues 195–230 (RAKE…PRSG) and 238–248 (KPREEKQEPKK).

The protein belongs to the histone H1/H5 family. In terms of tissue distribution, testis-specific.

The protein resides in the nucleus. It localises to the chromosome. Its function is as follows. Essential for normal spermatogenesis and male fertility. Required for proper cell restructuring and DNA condensation during the elongation phase of spermiogenesis. Involved in the histone-protamine transition of sperm chromatin and the subsequent production of functional sperm. Binds both double-stranded and single-stranded DNA, ATP and protamine-1. The polypeptide is Testis-specific H1 histone (Homo sapiens (Human)).